We begin with the raw amino-acid sequence, 93 residues long: MAKEELIQFEGLVTEILPDARYRVQLDAGHEIVAYTAGKMKKNRIKTLAGDRVTIEMSPYDLEKGRLIFRHKDERPSGAPRGGPPRGGQFRRR.

One can recognise an S1-like domain in the interval 1 to 72 (MAKEELIQFE…EKGRLIFRHK (72 aa)). Residues 69 to 93 (FRHKDERPSGAPRGGPPRGGQFRRR) form a disordered region.

The protein belongs to the IF-1 family. Component of the 30S ribosomal translation pre-initiation complex which assembles on the 30S ribosome in the order IF-2 and IF-3, IF-1 and N-formylmethionyl-tRNA(fMet); mRNA recruitment can occur at any time during PIC assembly.

The protein resides in the cytoplasm. One of the essential components for the initiation of protein synthesis. Stabilizes the binding of IF-2 and IF-3 on the 30S subunit to which N-formylmethionyl-tRNA(fMet) subsequently binds. Helps modulate mRNA selection, yielding the 30S pre-initiation complex (PIC). Upon addition of the 50S ribosomal subunit IF-1, IF-2 and IF-3 are released leaving the mature 70S translation initiation complex. The protein is Translation initiation factor IF-1 of Nitrobacter hamburgensis (strain DSM 10229 / NCIMB 13809 / X14).